Reading from the N-terminus, the 944-residue chain is Respiratory burst oxidase homolog protein F (944 aa).

The Cytoplasmic segment spans residues 2-387 (KPFSKNDRRR…VYIMQENWKR (386 aa)). Coiled-coil stretches lie at residues 102 to 126 (QFSQ…KRFS) and 157 to 184 (LEAR…RGLR). 2 EF-hand-like regions span residues 207–215 (EKNGYIYRS) and 241–252 (RRLKVEKINHDE). 2 EF-hand domains span residues 264-299 (SFDS…SASA) and 308-343 (QAEE…KDTY). The Ca(2+) site is built by aspartate 277, asparagine 279, aspartate 281, arginine 283, glutamate 288, aspartate 321, and tyrosine 327. Residues serine 354 and serine 358 each carry the phosphoserine modification. The chain crosses the membrane as a helical span at residues 388-408 (IWVLSLWIMIMIGLFLWKFFQ). The Extracellular segment spans residues 409 to 475 (YKQKDAFHVM…INFHKTIAGA (67 aa)). Residues 426–583 (KGAAETLKFN…LFVIVYILLI (158 aa)) form the Ferric oxidoreductase domain. Residues 476–492 (IVVAVILHIGDHLACDF) form a helical membrane-spanning segment. Topologically, residues 493–527 (PRIVRATEYDYNRYLFHYFQTKQPTYFDLVKGPEG) are cytoplasmic. The helical transmembrane segment at 528 to 548 (ITGILMVILMIISFTLATRWF) threads the bilayer. Residues 549-570 (RRNLVKLPKPFDRLTGFNAFWY) are Extracellular-facing. The helical transmembrane segment at 571–591 (SHHLFVIVYILLILHGIFLYF) threads the bilayer. Residues 592–599 (AKPWYVRT) are Cytoplasmic-facing. A helical membrane pass occupies residues 600–617 (TWMYLAVPVLLYGGERTL). At 618–744 (RYFRSGSYSV…PYGAPAQDYR (127 aa)) the chain is on the extracellular side. Residues 622–742 (SGSYSVRLLK…DGPYGAPAQD (121 aa)) enclose the FAD-binding FR-type domain. Residues 745–765 (KYDVLLLVGLGIGATPFISIL) form a helical membrane-spanning segment. The Cytoplasmic segment spans residues 766–944 (KDLLNNIVKM…TKFEFHKEHF (179 aa)).

This sequence belongs to the RBOH (TC 5.B.1.3) family. As to quaternary structure, monomer and homodimer. Interacts (via N-terminus) with CIPK26. Interacts (via N-terminus) with SRC2. Not glycosylated. Phosphorylated by CIPK26. In terms of tissue distribution, expressed in roots, stems, seedlings, inflorescences, leaves and guard cells.

It is found in the cell membrane. With respect to regulation, inhibited by diphenylene iodonium (DPI). In terms of biological role, calcium-dependent NADPH oxidase that generates superoxide. Generates reactive oxygen species (ROS) during incompatible interactions with pathogens and is important in the regulation of the hypersensitive response (HR). Involved in abscisic acid-induced stomatal closing and in UV-B and abscisic acid ROS-dependent signaling. The sequence is that of Respiratory burst oxidase homolog protein F (RBOHF) from Arabidopsis thaliana (Mouse-ear cress).